We begin with the raw amino-acid sequence, 525 residues long: Zwittermicin A synthase ZmaJ (525 aa).

Belongs to the ATP-dependent AMP-binding enzyme family.

It catalyses the reaction holo-[peptidyl-carrier protein] + L-serine + ATP = L-seryl-[peptidyl-carrier protein] + AMP + diphosphate. It participates in antibiotic biosynthesis. In terms of biological role, involved in the biosynthesis of the linear aminopolyol antibiotic zwittermicin A (ZmA). Specifically adenylates L-serine and loads it onto the holo form of ZmaH via a thioester linkage to the phosphopanthetheine moiety. This chain is Zwittermicin A synthase ZmaJ, found in Bacillus cereus.